Consider the following 887-residue polypeptide: Probable LRR receptor-like serine/threonine-protein kinase At5g59680 (887 aa).

An N-terminal signal peptide occupies residues 1–23 (MERSLELLLLLIRTLAIIHISQA). Residues 25–510 (SQQGFISLDC…TKSGKSFPVT (486 aa)) are Extracellular-facing. 12 N-linked (GlcNAc...) asparagine glycosylation sites follow: Asn143, Asn230, Asn256, Asn289, Asn338, Asn363, Asn400, Asn416, Asn432, Asn445, Asn464, and Asn471. 3 LRR repeats span residues 411–434 (RITT…QNLT), 435–457 (TLEK…LSNM), and 459–481 (SLLV…LQRK). Residues 511 to 531 (IVASVGSAAILIVVLVLVLFL) traverse the membrane as a helical segment. The Cytoplasmic segment spans residues 532–887 (RKKKPSAVEV…FDAEMIPRAR (356 aa)). Thr571 is subject to Phosphothreonine. Residues 580 to 853 (NNFGRVVGEG…HVVIELKECL (274 aa)) form the Protein kinase domain. Residues 586-594 (VGEGGFGVV) and Lys608 contribute to the ATP site. Tyr653 carries the phosphotyrosine modification. Asp705 serves as the catalytic Proton acceptor. Phosphoserine is present on Ser739. Residues Thr740 and Thr745 each carry the phosphothreonine modification. Tyr753 is modified (phosphotyrosine).

This sequence belongs to the protein kinase superfamily. Ser/Thr protein kinase family.

The protein localises to the membrane. It carries out the reaction L-seryl-[protein] + ATP = O-phospho-L-seryl-[protein] + ADP + H(+). It catalyses the reaction L-threonyl-[protein] + ATP = O-phospho-L-threonyl-[protein] + ADP + H(+). This is Probable LRR receptor-like serine/threonine-protein kinase At5g59680 from Arabidopsis thaliana (Mouse-ear cress).